The chain runs to 284 residues: Nucleoid occlusion protein (284 aa).

The H-T-H motif DNA-binding region spans 143–162; sequence EALAQRVGKSQSAIANKMRL.

Belongs to the ParB family.

Its subcellular location is the cytoplasm. It is found in the nucleoid. Effects nucleoid occlusion by binding relatively nonspecifically to DNA and preventing the assembly of the division machinery in the vicinity of the nucleoid, especially under conditions that disturb the cell cycle. It helps to coordinate cell division and chromosome segregation by preventing the formation of the Z ring through the nucleoid, which would cause chromosome breakage. This Listeria innocua serovar 6a (strain ATCC BAA-680 / CLIP 11262) protein is Nucleoid occlusion protein.